Reading from the N-terminus, the 403-residue chain is MKFIDESLIRIEAGDGGNGCVSFRREKFIPKGGPDGGDGGDGGDVYLQADENLNTLIDYRFNKRFAAERGENGRSSDCTGRRGKDIILPVPVGTRAIDNDTKETLGDLTQHGQKMLVAKGGYHGLGNTRFKSSVNRAPRQKTMGTPGEKRDLLLELMLLADVGMLGFPNAGKSTFIRAVSAAKPKVADYPFTTLVPSLGVVKVDDSHSFVVADIPGLIEGAADGAGLGIRFLKHLERCRVLIHLVDIAPIDGSNPADNVAIIESELFQYSEKLSEKPRWLVFNKIDTMSDEEAEERVREITEQLGWEEDYYLISAATGKNVPPLCRDIMDFIIANPREAETQQVAPEEVKFKWEDYHQEQLAEYQFDDDEDWDDDWTEEDDDEDWDDDWTEEDDEGIEFIYKP.

In terms of domain architecture, Obg spans 1-159 (MKFIDESLIR…RDLLLELMLL (159 aa)). Residues 160–333 (ADVGMLGFPN…LCRDIMDFII (174 aa)) form the OBG-type G domain. GTP contacts are provided by residues 166–173 (GFPNAGKS), 191–195 (FTTLV), 213–216 (DIPG), 283–286 (NKID), and 314–316 (SAA). 2 residues coordinate Mg(2+): Ser-173 and Thr-193. The segment at 363–403 (EYQFDDDEDWDDDWTEEDDDEDWDDDWTEEDDEGIEFIYKP) is disordered. Residues 365-397 (QFDDDEDWDDDWTEEDDDEDWDDDWTEEDDEGI) show a composition bias toward acidic residues.

The protein belongs to the TRAFAC class OBG-HflX-like GTPase superfamily. OBG GTPase family. Monomer. Mg(2+) serves as cofactor.

It is found in the cytoplasm. In terms of biological role, an essential GTPase which binds GTP, GDP and possibly (p)ppGpp with moderate affinity, with high nucleotide exchange rates and a fairly low GTP hydrolysis rate. Plays a role in control of the cell cycle, stress response, ribosome biogenesis and in those bacteria that undergo differentiation, in morphogenesis control. The chain is GTPase Obg from Haemophilus influenzae (strain PittEE).